A 357-amino-acid polypeptide reads, in one-letter code: Uroporphyrinogen decarboxylase (357 aa).

Substrate is bound by residues 27 to 31, Asp77, Tyr154, Ser209, and His330; that span reads RQAGR.

This sequence belongs to the uroporphyrinogen decarboxylase family. In terms of assembly, homodimer.

The protein localises to the cytoplasm. It carries out the reaction uroporphyrinogen III + 4 H(+) = coproporphyrinogen III + 4 CO2. The protein operates within porphyrin-containing compound metabolism; protoporphyrin-IX biosynthesis; coproporphyrinogen-III from 5-aminolevulinate: step 4/4. Its function is as follows. Catalyzes the decarboxylation of four acetate groups of uroporphyrinogen-III to yield coproporphyrinogen-III. This chain is Uroporphyrinogen decarboxylase, found in Acinetobacter baumannii (strain AB0057).